Reading from the N-terminus, the 201-residue chain is Pyridoxine/pyridoxamine 5'-phosphate oxidase (201 aa).

FMN is bound by residues 45–50 (RMVLLK), 65–66 (YT), Arg-71, Lys-72, and Gln-94. Lys-50 serves as a coordination point for substrate. Tyr-112, Arg-116, and Ser-120 together coordinate substrate. Residues 129-130 (QS) and Trp-174 each bind FMN. 180–182 (RLH) contributes to the substrate binding site. Residue Arg-184 participates in FMN binding.

This sequence belongs to the pyridoxamine 5'-phosphate oxidase family. Homodimer. FMN serves as cofactor.

The enzyme catalyses pyridoxamine 5'-phosphate + O2 + H2O = pyridoxal 5'-phosphate + H2O2 + NH4(+). It carries out the reaction pyridoxine 5'-phosphate + O2 = pyridoxal 5'-phosphate + H2O2. It functions in the pathway cofactor metabolism; pyridoxal 5'-phosphate salvage; pyridoxal 5'-phosphate from pyridoxamine 5'-phosphate: step 1/1. Its pathway is cofactor metabolism; pyridoxal 5'-phosphate salvage; pyridoxal 5'-phosphate from pyridoxine 5'-phosphate: step 1/1. In terms of biological role, catalyzes the oxidation of either pyridoxine 5'-phosphate (PNP) or pyridoxamine 5'-phosphate (PMP) into pyridoxal 5'-phosphate (PLP). In Rhodospirillum rubrum (strain ATCC 11170 / ATH 1.1.1 / DSM 467 / LMG 4362 / NCIMB 8255 / S1), this protein is Pyridoxine/pyridoxamine 5'-phosphate oxidase.